Here is a 357-residue protein sequence, read N- to C-terminus: Mannonate dehydratase (357 aa).

This sequence belongs to the mannonate dehydratase family. Requires Fe(2+) as cofactor. It depends on Mn(2+) as a cofactor.

It carries out the reaction D-mannonate = 2-dehydro-3-deoxy-D-gluconate + H2O. Its pathway is carbohydrate metabolism; pentose and glucuronate interconversion. Its function is as follows. Catalyzes the dehydration of D-mannonate. The polypeptide is Mannonate dehydratase (Enterococcus faecalis (strain ATCC 700802 / V583)).